The chain runs to 317 residues: Transaldolase (317 aa).

Lys126 acts as the Schiff-base intermediate with substrate in catalysis.

It belongs to the transaldolase family. Type 1 subfamily. Homodimer.

The protein localises to the cytoplasm. The catalysed reaction is D-sedoheptulose 7-phosphate + D-glyceraldehyde 3-phosphate = D-erythrose 4-phosphate + beta-D-fructose 6-phosphate. Its pathway is carbohydrate degradation; pentose phosphate pathway; D-glyceraldehyde 3-phosphate and beta-D-fructose 6-phosphate from D-ribose 5-phosphate and D-xylulose 5-phosphate (non-oxidative stage): step 2/3. In terms of biological role, transaldolase is important for the balance of metabolites in the pentose-phosphate pathway. The protein is Transaldolase of Burkholderia ambifaria (strain MC40-6).